The chain runs to 721 residues: K(+)-insensitive pyrophosphate-energized proton pump (721 aa).

5 consecutive transmembrane segments (helical) span residues 8 to 28, 57 to 77, 82 to 102, 136 to 156, and 168 to 188; these read LLGV…AVWV, YRTL…AIDM, FGLT…AGYL, VMGL…YLVF, and LVAL…GGGI. K191 lines the substrate pocket. 4 residues coordinate Mg(2+): D194, D198, N221, and D224. Transmembrane regions (helical) follow at residues 247-267, 294-314, 323-343, 374-394, and 416-436; these read AIFL…IILF, ISLA…IGAF, ALAL…IVKI, YGVG…VLGI, and AGIF…GIII. D446 is a binding site for Mg(2+). 4 consecutive transmembrane segments (helical) span residues 483–503, 527–547, 599–619, and 621–641; these read AIAS…FEIV, LINA…YFFS, FLIP…LLGW, and ALAG…LLMA. Residues D648, D672, and D676 each coordinate Ca(2+). K679 contributes to the substrate binding site. Residues 698-718 traverse the membrane as a helical segment; that stretch reads VVFTYVIVSTNIALGIWPSGL.

Belongs to the H(+)-translocating pyrophosphatase (TC 3.A.10) family. K(+)-insensitive subfamily. As to quaternary structure, homodimer. Mg(2+) is required as a cofactor.

It is found in the cell membrane. It catalyses the reaction diphosphate + H2O + H(+)(in) = 2 phosphate + 2 H(+)(out). In terms of biological role, proton pump that utilizes the energy of pyrophosphate hydrolysis as the driving force for proton movement across the membrane. Generates a proton motive force. The chain is K(+)-insensitive pyrophosphate-energized proton pump from Pyrobaculum aerophilum (strain ATCC 51768 / DSM 7523 / JCM 9630 / CIP 104966 / NBRC 100827 / IM2).